A 261-amino-acid polypeptide reads, in one-letter code: Claudin-18 (261 aa).

Over 1–6 (MSTTTC) the chain is Cytoplasmic. A helical transmembrane segment spans residues 7 to 27 (QVVAFLLSILGLAGCIAATGM). The Extracellular segment spans residues 28 to 80 (DMWSTQDLYDNPVTSVFQYEGLWRSCVRQSSGFTECRPYFTILGLPAMLQAVR). A helical transmembrane segment spans residues 81-101 (ALMIVGIVLGAIGLLVSIFAL). At 102-122 (KCIRIGSMEDSAKANMTLTSG) the chain is on the cytoplasmic side. The chain crosses the membrane as a helical span at residues 123-143 (IMFIVSGLCAIAGVSVFANML). Topologically, residues 144-174 (VTNFWMSTANMYTGMGGMVQTVQTRYTFGAA) are extracellular. Residues 175-195 (LFVGWVAGGLTLIGGVMMCIA) traverse the membrane as a helical segment. Residues 195 to 261 (ACRGLAPEET…QSYPSKHDYV (67 aa)) form a required for role in regulation of RANKL-induced osteoclast differentiation region. At 196–261 (CRGLAPEETN…QSYPSKHDYV (66 aa)) the chain is on the cytoplasmic side. The residue at position 214 (serine 214) is a Phosphoserine. A disordered region spans residues 242–261 (DGGARTEDEVQSYPSKHDYV).

The protein belongs to the claudin family. Interacts with TJP2/ZO-2. Interacts with TJP1/ZO-1. Interacts with YAP1 (phosphorylated); the interaction sequesters YAP1 away from the nucleus and thereby restricts transcription of YAP1 target genes. In terms of assembly, interacts with CLDN19. In terms of tissue distribution, expression is restricted to the lung. Expression is restricted to the stomach mucosa where it is predominantly observed in the epithelial cells of the pit region and the base of the gastric glands including exocrine and endocrine cells (at protein level).

It is found in the cell junction. The protein localises to the tight junction. The protein resides in the cell membrane. Its subcellular location is the lateral cell membrane. In terms of biological role, involved in alveolar fluid homeostasis via regulation of alveolar epithelial tight junction composition and therefore ion transport and solute permeability, potentially via downstream regulation of the actin cytoskeleton organization and beta-2-adrenergic signaling. Required for lung alveolarization and maintenance of the paracellular alveolar epithelial barrier. Acts to maintain epithelial progenitor cell proliferation and organ size, via regulation of YAP1 localization away from the nucleus and thereby restriction of YAP1 target gene transcription. Acts as a negative regulator of RANKL-induced osteoclast differentiation, potentially via relocation of TJP2/ZO-2 away from the nucleus, subsequently involved in bone resorption in response to calcium deficiency. Mediates the osteoprotective effects of estrogen, potentially via acting downstream of estrogen signaling independently of RANKL signaling pathways. Its function is as follows. Involved in the maintenance of homeostasis of the alveolar microenvironment via regulation of pH and subsequent T-cell activation in the alveolar space, is therefore indirectly involved in limiting C.neoformans infection. Required for the formation of the gastric paracellular barrier via its role in tight junction formation, thereby involved in the response to gastric acidification. This is Claudin-18 (CLDN18) from Homo sapiens (Human).